The chain runs to 412 residues: Probable tRNA pseudouridine synthase D (412 aa).

The active-site Nucleophile is the D97. The TRUD domain maps to 167 to 370; sequence ALPNYYGYQR…YGSYRRARLQ (204 aa).

The protein belongs to the pseudouridine synthase TruD family.

The catalysed reaction is uridine(13) in tRNA = pseudouridine(13) in tRNA. Functionally, could be responsible for synthesis of pseudouridine from uracil-13 in transfer RNAs. This is Probable tRNA pseudouridine synthase D from Pyrobaculum neutrophilum (strain DSM 2338 / JCM 9278 / NBRC 100436 / V24Sta) (Thermoproteus neutrophilus).